A 318-amino-acid polypeptide reads, in one-letter code: Aspartate carbamoyltransferase catalytic subunit (318 aa).

Residues R54 and T55 each contribute to the carbamoyl phosphate site. K82 is a binding site for L-aspartate. Carbamoyl phosphate contacts are provided by R104, H134, and Q137. 2 residues coordinate L-aspartate: R174 and R230. Residues G271 and P272 each contribute to the carbamoyl phosphate site.

Belongs to the aspartate/ornithine carbamoyltransferase superfamily. ATCase family. Heterododecamer (2C3:3R2) of six catalytic PyrB chains organized as two trimers (C3), and six regulatory PyrI chains organized as three dimers (R2).

It catalyses the reaction carbamoyl phosphate + L-aspartate = N-carbamoyl-L-aspartate + phosphate + H(+). It participates in pyrimidine metabolism; UMP biosynthesis via de novo pathway; (S)-dihydroorotate from bicarbonate: step 2/3. In terms of biological role, catalyzes the condensation of carbamoyl phosphate and aspartate to form carbamoyl aspartate and inorganic phosphate, the committed step in the de novo pyrimidine nucleotide biosynthesis pathway. This is Aspartate carbamoyltransferase catalytic subunit from Clavibacter sepedonicus (Clavibacter michiganensis subsp. sepedonicus).